A 1820-amino-acid chain; its full sequence is Kinesin-like protein KIF20B (1820 aa).

The 422-residue stretch at 58 to 479 (YLQVCLRIRP…LKFSAIAQKV (422 aa)) folds into the Kinesin motor domain. Residue 152–159 (GLTNSGKT) participates in ATP binding. Phosphoserine is present on serine 488. Coiled-coil stretches lie at residues 523-603 (ENSL…KIRE) and 674-793 (GFED…MENT). At threonine 560 the chain carries Phosphothreonine. The interval 829-866 (SERKRVNENELQQDEPPAKKGSIHVSSAITEDQKKSEE) is disordered. Serine 997 carries the post-translational modification Phosphoserine. The necessary and sufficient for interaction with SHTN1 stretch occupies residues 1050 to 1107 (ENSFHSSIEAIWEECKEIVKASSKKSHQIEELEQQIEKLQAEVKGYKDENNRLKEKEH). The segment covering 1247 to 1264 (EEEEETNRQETEKLKEEL) has biased composition (basic and acidic residues). Positions 1247-1275 (EEEEETNRQETEKLKEELSASSARTQNLK) are disordered. The segment covering 1265-1274 (SASSARTQNL) has biased composition (polar residues). The interval 1560 to 1820 (IETQIMDIKP…KRRLRTKTAK (261 aa)) is interaction with PIN1. A Phosphoserine modification is found at serine 1588. The residue at position 1644 (threonine 1644) is a Phosphothreonine; by CDK1. Serine 1658, serine 1715, and serine 1740 each carry phosphoserine. A compositionally biased stretch (polar residues) spans 1760–1772 (LSNVEASKENVSQ). The interval 1760-1781 (LSNVEASKENVSQPKRAKRKLY) is disordered.

Belongs to the TRAFAC class myosin-kinesin ATPase superfamily. Kinesin family. As to quaternary structure, oligomerizes (via kinesin motor domain). Associates with microtubules. Interacts (via C-terminal globular tail region) with PIN1 (via WW domain). Interacts with PRC1. Interacts with SHTN1 (via N-terminus); the interaction is direct and promotes the association of SHTN1 to microtubules in primary neurons. Post-translationally, phosphorylated during mitosis by CDK1. Brain, ovary, kidney and testis (at protein level). Overexpressed in bladder cancer cells (at protein level). Expressed in testis. Overexpressed in bladder cancer cells.

It localises to the nucleus. The protein localises to the cytoplasm. The protein resides in the cytoskeleton. It is found in the microtubule organizing center. Its subcellular location is the centrosome. It localises to the nucleolus. The protein localises to the nucleoplasm. The protein resides in the spindle. It is found in the spindle pole. Its subcellular location is the midbody. It localises to the cell projection. The protein localises to the axon. The protein resides in the growth cone. Plus-end-directed motor enzyme that is required for completion of cytokinesis. Required for proper midbody organization and abscission in polarized cortical stem cells. Plays a role in the regulation of neuronal polarization by mediating the transport of specific cargos. Participates in the mobilization of SHTN1 and in the accumulation of PIP3 in the growth cone of primary hippocampal neurons in a tubulin and actin-dependent manner. In the developing telencephalon, cooperates with SHTN1 to promote both the transition from the multipolar to the bipolar stage and the radial migration of cortical neurons from the ventricular zone toward the superficial layer of the neocortex. Involved in cerebral cortex growth. Acts as an oncogene for promoting bladder cancer cells proliferation, apoptosis inhibition and carcinogenic progression. This chain is Kinesin-like protein KIF20B, found in Homo sapiens (Human).